Reading from the N-terminus, the 184-residue chain is Isopentenyl-diphosphate Delta-isomerase (184 aa).

Mn(2+)-binding residues include His-25 and His-32. One can recognise a Nudix hydrolase domain in the interval 30 to 164 (PLHLAFSCWL…PWAFSPWMVL (135 aa)). Residue Cys-67 is part of the active site. Position 69 (His-69) interacts with Mn(2+). Residue Glu-87 participates in Mg(2+) binding. Mn(2+) contacts are provided by Glu-114 and Glu-116. Residue Glu-116 is part of the active site.

This sequence belongs to the IPP isomerase type 1 family. In terms of assembly, homodimer. Mg(2+) serves as cofactor. The cofactor is Mn(2+).

It localises to the cytoplasm. It carries out the reaction isopentenyl diphosphate = dimethylallyl diphosphate. It participates in isoprenoid biosynthesis; dimethylallyl diphosphate biosynthesis; dimethylallyl diphosphate from isopentenyl diphosphate: step 1/1. Functionally, catalyzes the 1,3-allylic rearrangement of the homoallylic substrate isopentenyl (IPP) to its highly electrophilic allylic isomer, dimethylallyl diphosphate (DMAPP). The chain is Isopentenyl-diphosphate Delta-isomerase from Klebsiella pneumoniae subsp. pneumoniae (strain ATCC 700721 / MGH 78578).